Reading from the N-terminus, the 197-residue chain is Segregation and condensation protein B (197 aa).

This sequence belongs to the ScpB family. Homodimer. Homodimerization may be required to stabilize the binding of ScpA to the Smc head domains. Component of a cohesin-like complex composed of ScpA, ScpB and the Smc homodimer, in which ScpA and ScpB bind to the head domain of Smc. The presence of the three proteins is required for the association of the complex with DNA.

It localises to the cytoplasm. In terms of biological role, participates in chromosomal partition during cell division. May act via the formation of a condensin-like complex containing Smc and ScpA that pull DNA away from mid-cell into both cell halves. This is Segregation and condensation protein B from Syntrophotalea carbinolica (strain DSM 2380 / NBRC 103641 / GraBd1) (Pelobacter carbinolicus).